Here is a 179-residue protein sequence, read N- to C-terminus: Ribosomal RNA small subunit methyltransferase G (179 aa).

Residues G54, F59, 105-106 (IE), and R121 contribute to the S-adenosyl-L-methionine site.

This sequence belongs to the methyltransferase superfamily. RNA methyltransferase RsmG family.

The protein resides in the cytoplasm. It catalyses the reaction guanosine(527) in 16S rRNA + S-adenosyl-L-methionine = N(7)-methylguanosine(527) in 16S rRNA + S-adenosyl-L-homocysteine. In terms of biological role, specifically methylates the N7 position of guanine in position 527 of 16S rRNA. The protein is Ribosomal RNA small subunit methyltransferase G of Helicobacter bizzozeronii.